Here is a 200-residue protein sequence, read N- to C-terminus: Serine/arginine-rich splicing factor RSZ22 (200 aa).

The region spanning 2–71 (SRVYVGNLDP…NGWRVEQSHN (70 aa)) is the RRM domain. Positions 62 to 83 (NGWRVEQSHNRGERGGGGRGGD) are enriched in basic and acidic residues. Disordered stretches follow at residues 62–97 (NGWRVEQSHNRGERGGGGRGGDRGGGGGGRGGRGGS) and 112–200 (RECR…RSRS). Gly residues predominate over residues 84-96 (RGGGGGGRGGRGG). The CCHC-type zinc-finger motif lies at 99–116 (LKCYECGETGHFARECRN). A compositionally biased stretch (basic residues) spans 120–137 (TGRRRSKSRSRTPPRYRR). 7 positions are modified to phosphoserine: serine 138, serine 147, serine 152, serine 160, serine 162, serine 174, and serine 200. Low complexity predominate over residues 138–150 (SPSYGRRSYSPRA). Positions 151–166 (RSPPPPRRRSPSPPPA) are enriched in pro residues.

Belongs to the splicing factor SR family. RSZ subfamily. In terms of assembly, component of the spliceosome. Interacts with AFC2, RS2Z33 and RNU1. In terms of processing, extensively phosphorylated on serine residues in the RS domain. Phosphorylated by AFC2. In terms of tissue distribution, expressed in primary and lateral roots, stems, petioles, abaxial and adaxial epidermis cells, trichomes, unopened flowers, anther filaments, anthers, stigma, pollen, pollen tube, ovule funiculi, integuments, embryo sac and developing seeds.

Its subcellular location is the nucleus speckle. The protein localises to the nucleus. It is found in the nucleolus. The protein resides in the nucleoplasm. It localises to the cytoplasm. Sequence-specific RNA-binding protein probably involved in pre-mRNA splicing. In vitro, can complement efficiently splicing-deficient mammalian SRSF7-depleted HeLa cell extract. This Arabidopsis thaliana (Mouse-ear cress) protein is Serine/arginine-rich splicing factor RSZ22 (RSZ22).